We begin with the raw amino-acid sequence, 222 residues long: MKDLPAAMRPREKLLALGPAALADAELLALLLRTGLKGTGVLQLAGQLLAQFGGIGGLLQADPAGLKTVKGLGPAKRSELQAVLELARRAIVSQLAQRPVFDSPQAVRDYLRLQLGRLDHEVFAVLFLDAQHRLIAYEPLFRGTLTQTSVYPREVLKRALALNAAALILAHNHPSGVAEPSRADEFLTQSLKTALALIDVRVLDHFVVGRESVVSFAERGLL.

An MPN domain is found at 100–222 (VFDSPQAVRD…VVSFAERGLL (123 aa)). His-171, His-173, and Asp-184 together coordinate Zn(2+). The JAMM motif signature appears at 171 to 184 (HNHPSGVAEPSRAD).

It belongs to the UPF0758 family.

This is UPF0758 protein Lcho_0695 from Leptothrix cholodnii (strain ATCC 51168 / LMG 8142 / SP-6) (Leptothrix discophora (strain SP-6)).